The chain runs to 414 residues: Multifunctional CCA protein (414 aa).

The ATP site is built by Gly-8 and Arg-11. CTP contacts are provided by Gly-8 and Arg-11. Residues Asp-21 and Asp-23 each contribute to the Mg(2+) site. 3 residues coordinate ATP: Arg-91, Arg-137, and Arg-140. Residues Arg-91, Arg-137, and Arg-140 each coordinate CTP. The 102-residue stretch at 228-329 folds into the HD domain; the sequence is TGIHTLMVLE…VKLFDKGDFW (102 aa).

The protein belongs to the tRNA nucleotidyltransferase/poly(A) polymerase family. Bacterial CCA-adding enzyme type 1 subfamily. In terms of assembly, monomer. Can also form homodimers and oligomers. It depends on Mg(2+) as a cofactor. Ni(2+) is required as a cofactor.

The catalysed reaction is a tRNA precursor + 2 CTP + ATP = a tRNA with a 3' CCA end + 3 diphosphate. The enzyme catalyses a tRNA with a 3' CCA end + 2 CTP + ATP = a tRNA with a 3' CCACCA end + 3 diphosphate. Its function is as follows. Catalyzes the addition and repair of the essential 3'-terminal CCA sequence in tRNAs without using a nucleic acid template. Adds these three nucleotides in the order of C, C, and A to the tRNA nucleotide-73, using CTP and ATP as substrates and producing inorganic pyrophosphate. tRNA 3'-terminal CCA addition is required both for tRNA processing and repair. Also involved in tRNA surveillance by mediating tandem CCA addition to generate a CCACCA at the 3' terminus of unstable tRNAs. While stable tRNAs receive only 3'-terminal CCA, unstable tRNAs are marked with CCACCA and rapidly degraded. This is Multifunctional CCA protein from Shewanella frigidimarina (strain NCIMB 400).